Reading from the N-terminus, the 125-residue chain is Large ribosomal subunit protein bL12 (125 aa).

It belongs to the bacterial ribosomal protein bL12 family. Homodimer. Part of the ribosomal stalk of the 50S ribosomal subunit. Forms a multimeric L10(L12)X complex, where L10 forms an elongated spine to which 2 to 4 L12 dimers bind in a sequential fashion. Binds GTP-bound translation factors.

In terms of biological role, forms part of the ribosomal stalk which helps the ribosome interact with GTP-bound translation factors. Is thus essential for accurate translation. This is Large ribosomal subunit protein bL12 from Helicobacter pylori (strain HPAG1).